A 282-amino-acid polypeptide reads, in one-letter code: Bifunctional protein FolD (282 aa).

Residues 164–166 (GAS), isoleucine 189, and isoleucine 230 contribute to the NADP(+) site.

This sequence belongs to the tetrahydrofolate dehydrogenase/cyclohydrolase family. In terms of assembly, homodimer.

It catalyses the reaction (6R)-5,10-methylene-5,6,7,8-tetrahydrofolate + NADP(+) = (6R)-5,10-methenyltetrahydrofolate + NADPH. The catalysed reaction is (6R)-5,10-methenyltetrahydrofolate + H2O = (6R)-10-formyltetrahydrofolate + H(+). It functions in the pathway one-carbon metabolism; tetrahydrofolate interconversion. In terms of biological role, catalyzes the oxidation of 5,10-methylenetetrahydrofolate to 5,10-methenyltetrahydrofolate and then the hydrolysis of 5,10-methenyltetrahydrofolate to 10-formyltetrahydrofolate. This Campylobacter jejuni subsp. jejuni serotype O:6 (strain 81116 / NCTC 11828) protein is Bifunctional protein FolD.